We begin with the raw amino-acid sequence, 260 residues long: Indole-3-glycerol phosphate synthase (260 aa).

Belongs to the TrpC family.

It carries out the reaction 1-(2-carboxyphenylamino)-1-deoxy-D-ribulose 5-phosphate + H(+) = (1S,2R)-1-C-(indol-3-yl)glycerol 3-phosphate + CO2 + H2O. The protein operates within amino-acid biosynthesis; L-tryptophan biosynthesis; L-tryptophan from chorismate: step 4/5. The sequence is that of Indole-3-glycerol phosphate synthase from Thermoanaerobacter pseudethanolicus (strain ATCC 33223 / 39E) (Clostridium thermohydrosulfuricum).